We begin with the raw amino-acid sequence, 216 residues long: Inorganic pyrophosphatase (216 aa).

Substrate contacts are provided by Lys39, Arg53, and Tyr65. Residues Asp93, Asp98, and Asp131 each coordinate Mg(2+). Substrate is bound at residue Tyr168.

The protein belongs to the PPase family. Homohexamer. The cofactor is Mg(2+).

Its subcellular location is the cytoplasm. It carries out the reaction diphosphate + H2O = 2 phosphate + H(+). Functionally, catalyzes the hydrolysis of inorganic pyrophosphate (PPi) forming two phosphate ions. The sequence is that of Inorganic pyrophosphatase from Chlamydia caviae (strain ATCC VR-813 / DSM 19441 / 03DC25 / GPIC) (Chlamydophila caviae).